Here is a 2391-residue protein sequence, read N- to C-terminus: Filaggrin-2 (2391 aa).

An S-100-like region spans residues 1–81; that stretch reads MTDLLRSVVT…TEFLLMIFKL (81 aa). 2 consecutive EF-hand domains span residues 8-43 and 49-84; these read VVTV…ELHP and DDPD…LTMA. Residues D62, D64, D66, R68, and E73 each coordinate Ca(2+). 3 disordered regions span residues 96–275, 349–369, and 406–2391; these read ASGS…DSGR, SYSQ…CGGQ, and NSSS…LSRH. Basic residues predominate over residues 98-107; sequence GSKKHRRGHR. Residues 111–121 are compositionally biased toward acidic residues; it reads EESETEEDEED. Over residues 149-163 the composition is skewed to basic residues; that stretch reads GTVKCRHGSNSRRLG. The segment covering 166–176 has biased composition (polar residues); the sequence is GNLSSSGNQEG. Over residues 193-209 the composition is skewed to basic and acidic residues; it reads GKDRHGSSSVELRERIN. One copy of the Filaggrin 1 repeat lies at 245–289; that stretch reads ETSGHESNSTQSRIREQKLGSSCSGSGDSGRRSHACGYSNSSGCG. 2 stretches are compositionally biased toward polar residues: residues 420-442 and 449-476; these read GSGS…SSGF and SGQT…SGKT. Residues 421–466 form a Filaggrin 2 repeat; sequence SGSSQSTSFEQHGTGLSQSSGFEQHVCGSGQTCGQHESTSSQSLGY. Residues 480 to 507 are compositionally biased toward gly residues; that stretch reads GQHGSGSGQSSGFGQCGSGSGQSSGFGQ. Residues 508 to 562 are compositionally biased toward low complexity; it reads HGSVSGQSSGFGQHGSVSGQSSGFGQHESRSRQSSYGQHGSGSSQSSGYGQYGSR. The span at 568–604 shows a compositional bias: gly residues; the sequence is GQHGLGSGQSTGFGQYGSGSGQSSGFGQHGSGSGQSS. The segment covering 605 to 655 has biased composition (low complexity); the sequence is GFGQHESRSGQSSYGQHSSGSSQSSGYGQHGSRQTSGFGQHGSGSSQSTGF. Gly residues predominate over residues 656–666; sequence GQYGSGSGQSS. Low complexity predominate over residues 667-734; the sequence is GFGQHVSGSG…SSGQSSSFGQ (68 aa). Over residues 735–756 the composition is skewed to gly residues; sequence HGSGSGQSSGFGQHGSGSGQSS. Low complexity predominate over residues 757–807; it reads GFGQHESRSGQSSYGQHSSGSSQSSGYGQHGSRQTSGFGQHGSGSSQSTGF. Over residues 808-831 the composition is skewed to gly residues; the sequence is GQYGSGSGQSAGFGQHGSGSGQSS. Over residues 832-884 the composition is skewed to low complexity; sequence GFGQHESRSHQSSYGQHGSGSSQSSGYGQHGSSSGQTSGFGQHRSSSGQYSGF. Over residues 885 to 908 the composition is skewed to gly residues; sequence GQHGSGSGQSSGFGQHGTGSGQYS. A compositionally biased stretch (low complexity) spans 918 to 956; it reads HQSSYGQHGSGSSQSSGYGQHGSSSGQTFGFGQHRSGSG. Positions 957 to 972 are enriched in gly residues; it reads QSSGFGQHGSGSGQSS. 2 stretches are compositionally biased toward low complexity: residues 973-982 and 994-1027; these read GFGQHESGSG and SSQS…GFGQ. A Filaggrin 3 repeat occupies 1019 to 1051; the sequence is SGQTTGFGQHRSSSGQYSGFGQHGSGSDQSSGF. Over residues 1052–1062 the composition is skewed to gly residues; sequence GQHGTGSGQSS. The span at 1063–1098 shows a compositional bias: low complexity; it reads GFGQYESRSRQSSYGQHGSGSSQSSGYGQHGSNSGQ. Residues 1097 to 1141 form a Filaggrin 4 repeat; the sequence is GQTSGFGQHRPGSGQSSGFGQYGSGSGQSSGFGQHGSGTGKSSGF. Over residues 1111–1137 the composition is skewed to gly residues; the sequence is QSSGFGQYGSGSGQSSGFGQHGSGTGK. The segment covering 1148 to 1174 has biased composition (low complexity); sequence SGQSSYGQHGTGSSQSSGCGQHESGSG. Residues 1175–1198 are compositionally biased toward polar residues; sequence PTTSFGQHVSGSDNFSSSGQHISD. A compositionally biased stretch (gly residues) spans 1206–1220; sequence GQYGSGSGQSTGLGQ. Polar residues predominate over residues 1226–1249; sequence VESGSTVHGRQETTHGQTINTTRH. Positions 1250–1263 are enriched in low complexity; it reads SQSGQGQSTQTGSR. A Phosphoserine modification is found at S1276. A compositionally biased stretch (polar residues) spans 1329–1343; it reads HGQSTQTGSRTSGRQ. Over residues 1346-1355 the composition is skewed to basic and acidic residues; it reads SHSDATDSEV. Residues 1366–1377 are compositionally biased toward polar residues; the sequence is QEQTHSQAGSQH. Positions 1378–1390 are enriched in basic and acidic residues; sequence GESESTVHERHET. The segment covering 1406–1416 has biased composition (low complexity); sequence HGQSTQRGSRT. Phosphoserine occurs at positions 1427 and 1428. Residues 1439 to 1459 are compositionally biased toward polar residues; that stretch reads RPQSQEQTHGQAGSQHGESGS. One copy of the Filaggrin 5 repeat lies at 1455 to 1510; that stretch reads GESGSTVHGRHGTTHGQTGDTTRHAHYHHGKSTQRGSSTTGRRGSGHSESSDSEVH. A compositionally biased stretch (low complexity) spans 1487–1496; the sequence is TQRGSSTTGR. 2 positions are modified to phosphoserine: S1504 and S1505. Positions 1510-1529 are enriched in low complexity; sequence HSGGSHTHSGHTHGQSGSQH. Residues 1544–1559 show a composition bias toward polar residues; that stretch reads HGQTGDTTRHSYSGHE. Positions 1560–1572 are enriched in low complexity; sequence QTTQTGSRTTGRQ. Composition is skewed to basic and acidic residues over residues 1575 to 1584 and 1605 to 1618; these read SHSESTDSEV and QHEE…ERHG. A Phosphoserine modification is found at S1579. Residues 1607-1662 form a Filaggrin 6 repeat; sequence EEPEFTVHERHGTTHGQIGDTTGHSHSGHGQSTQRGSRTTGRQRSSHSESSDSEVH. Low complexity predominate over residues 1627-1649; sequence TTGHSHSGHGQSTQRGSRTTGRQ. Basic and acidic residues predominate over residues 1652–1661; sequence SHSESSDSEV. A phosphoserine mark is found at S1656 and S1657. Low complexity-rich tracts occupy residues 1662-1686 and 1711-1720; these read HSGV…QSES and GLTTQTGSRT. The span at 1755–1768 shows a compositional bias: basic and acidic residues; sequence QHGESESIVHERHG. A Filaggrin 7 repeat occupies 1757 to 1812; sequence GESESIVHERHGTIHGQTGDTTRHAHSGHGQSTQTGSRTTGRRSSGHSEYSDSEGH. The segment covering 1784-1795 has biased composition (low complexity); sequence GHGQSTQTGSRT. A phosphoserine mark is found at S1800 and S1807. The span at 1834–1845 shows a compositional bias: basic and acidic residues; sequence GESESIVDERHG. Residues 1849-1873 show a composition bias toward low complexity; that stretch reads GQTGDTSGHSQSGHGQSTQSGSSTT. Residues 1879–1888 show a composition bias toward basic and acidic residues; that stretch reads GHSESSDSEV. S1883, S1884, and S1959 each carry phosphoserine. 2 Filaggrin repeats span residues 1928-1964 and 1984-2039; these read DTTE…SEGP and PESG…SEGH. Low complexity-rich tracts occupy residues 1963–1982 and 2013–2022; these read GPSG…AGSH and GQSTQRGSRT. S2034 is modified (phosphoserine). Low complexity-rich tracts occupy residues 2039 to 2059, 2114 to 2125, and 2162 to 2176; these read HSGV…SQHG, HSGVSHTHSGHT, and HGQS…TGRQ. Residues 2134 to 2189 form a Filaggrin 10 repeat; sequence GESGSAIHGRQGTIHGQTGDTTRHGQSGHGQSTQTGSRTTGRQRSSHSESSDSEVH. The span at 2179-2190 shows a compositional bias: basic and acidic residues; that stretch reads SHSESSDSEVHS. 3 stretches are compositionally biased toward low complexity: residues 2201-2211, 2219-2228, and 2238-2247; these read HSQAGSRHGQS, QGTTHGQTGD, and GQSTQRGSRT. Over residues 2273–2288 the composition is skewed to polar residues; it reads GHIQGQAGSQQRQPGS. Residues 2320–2331 show a composition bias toward low complexity; that stretch reads SRSSRASHFQSH. A compositionally biased stretch (polar residues) spans 2367-2391; it reads SRKSISNSHLSWSTDSTANKQLSRH.

The protein belongs to the S100-fused protein family. This sequence in the N-terminal section; belongs to the S-100 family. In terms of processing, deiminated by PADI1, PADI2 or PADI3 in vitro. The deiminated form is degraded by calpain-1/CAPN1 more quickly and into shorter peptides than the intact protein. May be processed by calpain-1/CAPN1 in the uppermost epidermal layers. As to expression, expressed in skin, thymus, stomach and placenta, but not detected in heart, brain, liver, lung, bone marrow, small intestine, spleen, prostate, colon, adrenal gland, kidney, pancreas, mammary gland, bladder, thyroid, salivary gland and trachea. Weakly expressed in esophagus, tonsils and testis (at protein level). In the skin, strongly expressed in the upper stratum granulosum and lower stratum corneum, but not detected in the upper stratum corneum (at protein level). In scalp hair follicles, mainly restricted within the granular and cornified cells surrounding the infundibular outer root sheath, with weak expression in central and proximal outer root sheath (at protein level). Tends to be down-regulated in sporiatic lesions compared to non-lesional skin inthe same patients.

It localises to the cytoplasm. The protein localises to the cytoplasmic granule. Its function is as follows. Essential for normal cell-cell adhesion in the cornified cell layers. Important for proper integrity and mechanical strength of the stratum corneum of the epidermis. This Homo sapiens (Human) protein is Filaggrin-2 (FLG2).